The chain runs to 593 residues: Potassium channel KAT6 (593 aa).

At 1-33 (MAASRSELLRPAFGEPSPSLGPFVVNPHTCSYR) the chain is on the cytoplasmic side. Residues 34–54 (WWQKFLIVLVLYTAWASPFEL) form a helical membrane-spanning segment. At 55–64 (AMEKSASAAL) the chain is on the extracellular side. The helical transmembrane segment at 65–85 (AVTELVVDAFFAVDIAVSFFV) threads the bilayer. Topologically, residues 86 to 106 (AYRDASTGLLVTDRKKIATRH) are cytoplasmic. Residues 107–129 (LARPCLALDVASTIPLQMIYRIV) form a helical membrane-spanning segment. Residues 130–138 (SGKRQALYG) are Extracellular-facing. Residues 139–159 (LLNLLRLWRLRRVSKLFARLE) traverse the membrane as a helical; Voltage-sensor segment. Residues 160–173 (KDIRFSYLWTRLIK) are Cytoplasmic-facing. A helical transmembrane segment spans residues 174-194 (LLYVTLFAVHFASCIYLWMAF). At 195–221 (HHKAKELTWIGSQFHGFEDRSVWFCYT) the chain is on the extracellular side. The segment at residues 222–241 (CAVYWSITTLATVGYGDLHA) is an intramembrane region (pore-forming). The Extracellular portion of the chain corresponds to 242-247 (ANTGEM). Residues 248 to 268 (LFSIAFMLFNMGLTSYIIGNI) traverse the membrane as a helical segment. Over 269–593 (TNLVVHETTN…RDGDHLFFSW (325 aa)) the chain is Cytoplasmic. Residue 350-470 (LFQGVSDKLV…VVVFSNFVLY (121 aa)) coordinates a nucleoside 3',5'-cyclic phosphate. The KHA domain occupies 522–593 (RVSIHEHLLN…RDGDHLFFSW (72 aa)).

It belongs to the potassium channel family. Plant (TC 1.A.1.4) subfamily.

Its subcellular location is the membrane. Its function is as follows. Probable inward-rectifying potassium channel. Assuming opened or closed conformations in response to the voltage difference across the membrane, the channel is activated by hyperpolarization. The chain is Potassium channel KAT6 from Oryza sativa subsp. japonica (Rice).